We begin with the raw amino-acid sequence, 1304 residues long: DNA-directed RNA polymerase subunit beta' (1304 aa).

The Zn(2+) site is built by Cys-60, Cys-62, Cys-75, and Cys-78. Mg(2+)-binding residues include Asp-541, Asp-543, and Asp-545. Residues Cys-887, Cys-963, Cys-970, and Cys-973 each coordinate Zn(2+).

Belongs to the RNA polymerase beta' chain family. As to quaternary structure, the RNAP catalytic core consists of 2 alpha, 1 beta, 1 beta' and 1 omega subunit. When a sigma factor is associated with the core the holoenzyme is formed, which can initiate transcription. Requires Mg(2+) as cofactor. It depends on Zn(2+) as a cofactor.

The enzyme catalyses RNA(n) + a ribonucleoside 5'-triphosphate = RNA(n+1) + diphosphate. In terms of biological role, DNA-dependent RNA polymerase catalyzes the transcription of DNA into RNA using the four ribonucleoside triphosphates as substrates. In Acidothermus cellulolyticus (strain ATCC 43068 / DSM 8971 / 11B), this protein is DNA-directed RNA polymerase subunit beta'.